Here is a 126-residue protein sequence, read N- to C-terminus: UPF0538 protein C2orf76 homolog (126 aa).

Belongs to the UPF0538 family.

This Danio rerio (Zebrafish) protein is UPF0538 protein C2orf76 homolog.